A 406-amino-acid polypeptide reads, in one-letter code: Putative nickel insertion protein (406 aa).

It belongs to the LarC family.

In Methanosphaera stadtmanae (strain ATCC 43021 / DSM 3091 / JCM 11832 / MCB-3), this protein is Putative nickel insertion protein.